Reading from the N-terminus, the 897-residue chain is Leucine--tRNA ligase (897 aa).

The 'HIGH' region motif lies at 49-59 (PYPSGKLHMGH). Positions 654–658 (KMSKS) match the 'KMSKS' region motif. ATP is bound at residue K657.

Belongs to the class-I aminoacyl-tRNA synthetase family.

The protein resides in the cytoplasm. It carries out the reaction tRNA(Leu) + L-leucine + ATP = L-leucyl-tRNA(Leu) + AMP + diphosphate. This Methylibium petroleiphilum (strain ATCC BAA-1232 / LMG 22953 / PM1) protein is Leucine--tRNA ligase.